The following is a 248-amino-acid chain: uncharacterized protein (248 aa).

Residues 33–57 (EWQLSEGQKRCEEINRQNRQLRVEK) are a coiled coil.

This is an uncharacterized protein from Escherichia coli (strain K12).